Here is a 308-residue protein sequence, read N- to C-terminus: Isoflavone reductase homolog (308 aa).

NADP(+) is bound by residues 11–17 (GGTGYIG), Arg36, and Lys45. Lys133 functions as the Proton acceptor in the catalytic mechanism. Arg137 lines the NADP(+) pocket.

Belongs to the NmrA-type oxidoreductase family. Isoflavone reductase subfamily.

Its subcellular location is the cytoplasm. In Solanum tuberosum (Potato), this protein is Isoflavone reductase homolog.